The primary structure comprises 341 residues: L-threonine 3-dehydrogenase (341 aa).

Residue C38 participates in Zn(2+) binding. Catalysis depends on charge relay system residues T40 and H43. Zn(2+) contacts are provided by H63, E64, C93, C96, C99, and C107. NAD(+)-binding positions include I175, D195, R200, 262–264 (LGI), and 286–287 (IY).

The protein belongs to the zinc-containing alcohol dehydrogenase family. In terms of assembly, homotetramer. Zn(2+) is required as a cofactor.

It localises to the cytoplasm. It carries out the reaction L-threonine + NAD(+) = (2S)-2-amino-3-oxobutanoate + NADH + H(+). It functions in the pathway amino-acid degradation; L-threonine degradation via oxydo-reductase pathway; glycine from L-threonine: step 1/2. Catalyzes the NAD(+)-dependent oxidation of L-threonine to 2-amino-3-ketobutyrate. In Escherichia coli O139:H28 (strain E24377A / ETEC), this protein is L-threonine 3-dehydrogenase.